The sequence spans 934 residues: Bifunctional uridylyltransferase/uridylyl-removing enzyme (934 aa).

The segment at 1–379 (MSAHDLKLEE…TFSRRKRKLS (379 aa)) is uridylyltransferase. Positions 380–736 (DDGAFISENH…AKPHAFEAVT (357 aa)) are uridylyl-removing. Residues 496-613 (VDEHLLRCIA…IDFADTVQTM (118 aa)) form the HD domain. 2 consecutive ACT domains span residues 737 to 818 (EITV…DMLA) and 848 to 931 (VIEV…RSPQ).

It belongs to the GlnD family. Mg(2+) serves as cofactor.

The catalysed reaction is [protein-PII]-L-tyrosine + UTP = [protein-PII]-uridylyl-L-tyrosine + diphosphate. It carries out the reaction [protein-PII]-uridylyl-L-tyrosine + H2O = [protein-PII]-L-tyrosine + UMP + H(+). With respect to regulation, uridylyltransferase (UTase) activity is inhibited by glutamine, while glutamine activates uridylyl-removing (UR) activity. In terms of biological role, modifies, by uridylylation and deuridylylation, the PII regulatory proteins (GlnB and homologs), in response to the nitrogen status of the cell that GlnD senses through the glutamine level. Under low glutamine levels, catalyzes the conversion of the PII proteins and UTP to PII-UMP and PPi, while under higher glutamine levels, GlnD hydrolyzes PII-UMP to PII and UMP (deuridylylation). Thus, controls uridylylation state and activity of the PII proteins, and plays an important role in the regulation of nitrogen assimilation and metabolism. The sequence is that of Bifunctional uridylyltransferase/uridylyl-removing enzyme from Brucella abortus (strain S19).